The sequence spans 431 residues: Adenylosuccinate synthetase (431 aa).

GTP is bound by residues 13–19 (GDEGKGK) and 41–43 (GHT). Asp14 acts as the Proton acceptor in catalysis. Positions 14 and 41 each coordinate Mg(2+). IMP is bound by residues 14–17 (DEGK), 39–42 (NAGH), Thr130, Arg144, Gln225, Thr240, and Arg304. The active-site Proton donor is His42. 300-306 (AVTGRPR) serves as a coordination point for substrate. GTP contacts are provided by residues Arg306, 332-334 (KLD), and 415-417 (STG).

It belongs to the adenylosuccinate synthetase family. As to quaternary structure, homodimer. Mg(2+) serves as cofactor.

The protein resides in the cytoplasm. The catalysed reaction is IMP + L-aspartate + GTP = N(6)-(1,2-dicarboxyethyl)-AMP + GDP + phosphate + 2 H(+). Its pathway is purine metabolism; AMP biosynthesis via de novo pathway; AMP from IMP: step 1/2. In terms of biological role, plays an important role in the de novo pathway of purine nucleotide biosynthesis. Catalyzes the first committed step in the biosynthesis of AMP from IMP. The polypeptide is Adenylosuccinate synthetase (Legionella pneumophila (strain Lens)).